We begin with the raw amino-acid sequence, 362 residues long: Carbamoyl phosphate synthase pyrimidine-specific small chain (362 aa).

Residues 1–168 are CPSase; that stretch reads MKRQLILEDG…TRDPYHVPGP (168 aa). Ser-45, Gly-219, and Gly-221 together coordinate L-glutamine. Residues 171–358 enclose the Glutamine amidotransferase type-1 domain; the sequence is RVVLVDYGMK…IKLMESNKHR (188 aa). Cys-246 serves as the catalytic Nucleophile. L-glutamine contacts are provided by Leu-247, Gln-250, Asn-288, Gly-290, and Tyr-291. Residues His-331 and Glu-333 contribute to the active site.

It belongs to the CarA family. In terms of assembly, composed of two chains; the small (or glutamine) chain promotes the hydrolysis of glutamine to ammonia, which is used by the large (or ammonia) chain to synthesize carbamoyl phosphate. Tetramer of heterodimers (alpha,beta)4.

The catalysed reaction is hydrogencarbonate + L-glutamine + 2 ATP + H2O = carbamoyl phosphate + L-glutamate + 2 ADP + phosphate + 2 H(+). It catalyses the reaction L-glutamine + H2O = L-glutamate + NH4(+). Its pathway is pyrimidine metabolism; UMP biosynthesis via de novo pathway; (S)-dihydroorotate from bicarbonate: step 1/3. Small subunit of the glutamine-dependent carbamoyl phosphate synthetase (CPSase). CPSase catalyzes the formation of carbamoyl phosphate from the ammonia moiety of glutamine, carbonate, and phosphate donated by ATP, constituting the first step of the biosynthetic pathway leading to pyrimidine nucleotides. The small subunit (glutamine amidotransferase) binds and cleaves glutamine to supply the large subunit with the substrate ammonia. This is Carbamoyl phosphate synthase pyrimidine-specific small chain from Halalkalibacterium halodurans (strain ATCC BAA-125 / DSM 18197 / FERM 7344 / JCM 9153 / C-125) (Bacillus halodurans).